Reading from the N-terminus, the 493-residue chain is Ribose import ATP-binding protein RbsA (493 aa).

ABC transporter domains are found at residues 5-241 (LKIS…VGRR) and 252-491 (EKGE…AAAI). Position 37–44 (37–44 (GENGAGKS)) interacts with ATP.

This sequence belongs to the ABC transporter superfamily. Ribose importer (TC 3.A.1.2.1) family. In terms of assembly, the complex is composed of an ATP-binding protein (RbsA), two transmembrane proteins (RbsC) and a solute-binding protein (RbsB).

It is found in the cell inner membrane. The enzyme catalyses D-ribose(out) + ATP + H2O = D-ribose(in) + ADP + phosphate + H(+). In terms of biological role, part of the ABC transporter complex RbsABC involved in ribose import. Responsible for energy coupling to the transport system. The polypeptide is Ribose import ATP-binding protein RbsA (Haemophilus influenzae (strain 86-028NP)).